The sequence spans 411 residues: Translation initiation factor 2 subunit gamma (411 aa).

Residues 9–201 enclose the tr-type G domain; sequence QPSVNIGMVG…AIEKYIPSPK (193 aa). A G1 region spans residues 18-25; sequence GHVDHGKS. Mg(2+) is bound by residues aspartate 21, serine 25, glycine 46, and serine 48. 21 to 26 is a GTP binding site; sequence DHGKST. The tract at residues 46 to 50 is G2; that stretch reads GISIK. The tract at residues 88–91 is G3; it reads DAPG. Residues 144–147 and 179–181 each bind GTP; these read NKID and SAY. The interval 144–147 is G4; the sequence is NKID. Positions 179–181 are G5; the sequence is SAY.

Belongs to the TRAFAC class translation factor GTPase superfamily. Classic translation factor GTPase family. EIF2G subfamily. Heterotrimer composed of an alpha, a beta and a gamma chain. The cofactor is Mg(2+).

The enzyme catalyses GTP + H2O = GDP + phosphate + H(+). EIF-2 functions in the early steps of protein synthesis by forming a ternary complex with GTP and initiator tRNA. This chain is Translation initiation factor 2 subunit gamma, found in Thermoplasma acidophilum (strain ATCC 25905 / DSM 1728 / JCM 9062 / NBRC 15155 / AMRC-C165).